Reading from the N-terminus, the 439-residue chain is 23S rRNA (uracil(1939)-C(5))-methyltransferase RlmD (439 aa).

One can recognise a TRAM domain in the interval 10-68 (KSTQPQRIEFTVDSLDHHCVGIGRHQGKAIFIEGALPGEQVKARILDDKKQYAHAALQQ). C81, C87, C90, and C169 together coordinate [4Fe-4S] cluster. The S-adenosyl-L-methionine site is built by Q273, F302, N307, E323, D350, and D371. The active-site Nucleophile is the C397.

The protein belongs to the class I-like SAM-binding methyltransferase superfamily. RNA M5U methyltransferase family. RlmD subfamily.

The enzyme catalyses uridine(1939) in 23S rRNA + S-adenosyl-L-methionine = 5-methyluridine(1939) in 23S rRNA + S-adenosyl-L-homocysteine + H(+). In terms of biological role, catalyzes the formation of 5-methyl-uridine at position 1939 (m5U1939) in 23S rRNA. The sequence is that of 23S rRNA (uracil(1939)-C(5))-methyltransferase RlmD from Aeromonas salmonicida (strain A449).